Consider the following 194-residue polypeptide: Histone H1.0 (194 aa).

At M1 the chain carries N-acetylmethionine. Residues 1-11 (MTENSTSTPAA) are compositionally biased toward low complexity. The disordered stretch occupies residues 1–29 (MTENSTSTPAAKPKRAKASKKSTDHPKYS). T2 carries the N-acetylthreonine; in Histone H1.0, N-terminally processed modification. Positions 24–97 (DHPKYSDMIV…GASGSFRLAK (74 aa)) constitute an H15 domain. A Citrulline modification is found at R42. The segment at 83–194 (QTKGVGASGS…SSAKRTGKKK (112 aa)) is disordered. S104 bears the ADP-ribosylserine mark. A compositionally biased stretch (basic residues) spans 105–194 (VAFKKTKKEV…SSAKRTGKKK (90 aa)).

The protein belongs to the histone H1/H5 family. ADP-ribosylated on Ser-104 in response to DNA damage.

Its subcellular location is the nucleus. The protein resides in the chromosome. In terms of biological role, histones H1 are necessary for the condensation of nucleosome chains into higher-order structures. The histones H1.0 are found in cells that are in terminal stages of differentiation or that have low rates of cell division. In Bos taurus (Bovine), this protein is Histone H1.0 (H1-0).